The sequence spans 68 residues: Large ribosomal subunit protein bL35 (68 aa).

It belongs to the bacterial ribosomal protein bL35 family.

This Rickettsia felis (strain ATCC VR-1525 / URRWXCal2) (Rickettsia azadi) protein is Large ribosomal subunit protein bL35.